The sequence spans 287 residues: Cell division protein ZipA (287 aa).

Met1 is a topological domain (periplasmic). Residues 2–22 form a helical membrane-spanning segment; that stretch reads EIGLREWLIVIGIIVIAGILF. At 23 to 287 the chain is on the cytoplasmic side; sequence DGWRRMRGSK…ERRALTQRRG (265 aa). The tract at residues 48 to 140 is disordered; that stretch reads DEEETTSAEV…PTQRITEDKD (93 aa). Basic and acidic residues-rich tracts occupy residues 64–77, 85–104, and 121–140; these read LDTH…EHDL, REGK…KDEP, and GRDD…EDKD.

The protein belongs to the ZipA family. In terms of assembly, interacts with FtsZ via their C-terminal domains.

Its subcellular location is the cell inner membrane. In terms of biological role, essential cell division protein that stabilizes the FtsZ protofilaments by cross-linking them and that serves as a cytoplasmic membrane anchor for the Z ring. Also required for the recruitment to the septal ring of downstream cell division proteins. The sequence is that of Cell division protein ZipA from Pseudomonas syringae pv. syringae (strain B728a).